Here is a 339-residue protein sequence, read N- to C-terminus: UDP-3-O-acylglucosamine N-acyltransferase (339 aa).

H239 (proton acceptor) is an active-site residue.

The protein belongs to the transferase hexapeptide repeat family. LpxD subfamily. As to quaternary structure, homotrimer.

The catalysed reaction is a UDP-3-O-[(3R)-3-hydroxyacyl]-alpha-D-glucosamine + a (3R)-hydroxyacyl-[ACP] = a UDP-2-N,3-O-bis[(3R)-3-hydroxyacyl]-alpha-D-glucosamine + holo-[ACP] + H(+). It participates in bacterial outer membrane biogenesis; LPS lipid A biosynthesis. Its function is as follows. Catalyzes the N-acylation of UDP-3-O-acylglucosamine using 3-hydroxyacyl-ACP as the acyl donor. Is involved in the biosynthesis of lipid A, a phosphorylated glycolipid that anchors the lipopolysaccharide to the outer membrane of the cell. This chain is UDP-3-O-acylglucosamine N-acyltransferase, found in Aliivibrio fischeri (strain ATCC 700601 / ES114) (Vibrio fischeri).